A 797-amino-acid chain; its full sequence is Inulosucrase (797 aa).

Residues 1–36 (MLENKNHKKISLSGKSLLMGTLSTAAIVLSASTANA) form the signal peptide. The segment covering 54-64 (ASSVNNENNKQ) has biased composition (polar residues). The segment at 54 to 176 (ASSVNNENNK…SVKPAENATK (123 aa)) is disordered. 2 stretches are compositionally biased toward basic and acidic residues: residues 65-75 (VTEKDSADKST) and 82-95 (ANTK…ETTE). Positions 130–139 (DQKTTNAATT) are enriched in low complexity. Residues 140–167 (DTKKDDVKQVEKKDSVDKTNAEENKDSS) show a composition bias toward basic and acidic residues. W271 provides a ligand contact to substrate. The active-site Nucleophile is D272. A Ca(2+)-binding site is contributed by N317. Position 340 (S340) interacts with substrate. D419 lines the Ca(2+) pocket. 424 to 425 (RD) contacts substrate. Q450, W487, N489, and D521 together coordinate Ca(2+). Residues 522-524 (EIE) and R542 contribute to the substrate site. E524 (proton donor/acceptor) is an active-site residue. 3 residues coordinate Ca(2+): D660, I662, and S667. The segment at 708-766 (QPVTPIPNVPTTPETPTTPDKPEVPTTPEVPTTPETPTPEAPKNPVKKTSQSKLPKAGD) is disordered. Low complexity predominate over residues 718 to 740 (TTPETPTTPDKPEVPTTPEVPTT). The short motif at 761-765 (LPKAG) is the LPXTG sorting signal element. A764 is modified (pentaglycyl murein peptidoglycan amidated alanine). The propeptide at 765 to 797 (GDKNSFAAVVLGAVSSILGAVGLTGVSKRKRNN) is removed by sortase.

It belongs to the glycosyl hydrolase 68 family. Ca(2+) serves as cofactor.

It is found in the secreted. The protein resides in the cell wall. The catalysed reaction is [(2-&gt;1)-beta-D-fructosyl](n) + sucrose = [(2-&gt;1)-beta-D-fructosyl](n+1) + D-glucose. Functionally, fructosyltransferase that catalyzes the polymerization of the fructose moiety of sucrose to produce inulin polymer and inulin oligosaccharides such as 1-kestose and nystose. This is Inulosucrase from Lactobacillus johnsonii (strain CNCM I-12250 / La1 / NCC 533).